The primary structure comprises 283 residues: D-alanine aminotransferase (283 aa).

Position 31 (Tyr31) interacts with substrate. Residue Arg50 coordinates pyridoxal 5'-phosphate. Arg98 and His100 together coordinate substrate. Lys144 functions as the Proton acceptor in the catalytic mechanism. At Lys144 the chain carries N6-(pyridoxal phosphate)lysine. Glu176 contributes to the pyridoxal 5'-phosphate binding site.

The protein belongs to the class-IV pyridoxal-phosphate-dependent aminotransferase family. As to quaternary structure, homodimer. Requires pyridoxal 5'-phosphate as cofactor.

It catalyses the reaction D-alanine + 2-oxoglutarate = D-glutamate + pyruvate. Its function is as follows. Acts on the D-isomers of alanine, leucine, aspartate, glutamate, aminobutyrate, norvaline and asparagine. The enzyme transfers an amino group from a substrate D-amino acid to the pyridoxal phosphate cofactor to form pyridoxamine and an alpha-keto acid in the first half-reaction. The second half-reaction is the reverse of the first, transferring the amino group from the pyridoxamine to a second alpha-keto acid to form the product D-amino acid via a ping-pong mechanism. This is an important process in the formation of D-alanine and D-glutamate, which are essential bacterial cell wall components. The polypeptide is D-alanine aminotransferase (dat) (Bacillus licheniformis).